The primary structure comprises 217 residues: MGQKVHPIGMRVGIIRDWDAKWYAEKEYADYLHEDLAIRKFVQKELADAAVSTIEIERAVNKVNVSLHTAKPGMVIGKGGANVDALRAKLNKLTGKQVHINIIEIKSPDLDAHLVGEGIARQLEQRVAFRRAQKQAIQRTMRAGAKGIKTQVSGRLNGADIARSEGYSEGTVPLHTLRADIDYAWEEADTTYGKLGVKVWIYRGEILPARKNTKGGK.

In terms of domain architecture, KH type-2 spans 38–106 (IRKFVQKELA…QVHINIIEIK (69 aa)).

It belongs to the universal ribosomal protein uS3 family. Part of the 30S ribosomal subunit. Forms a tight complex with proteins S10 and S14.

In terms of biological role, binds the lower part of the 30S subunit head. Binds mRNA in the 70S ribosome, positioning it for translation. The chain is Small ribosomal subunit protein uS3 from Streptococcus gordonii (strain Challis / ATCC 35105 / BCRC 15272 / CH1 / DL1 / V288).